The following is a 124-amino-acid chain: Large-conductance mechanosensitive channel (124 aa).

Helical transmembrane passes span 14-34 (VIDL…VQSL), 37-57 (NLIN…NLVF), and 67-87 (GSFI…FLIV).

The protein belongs to the MscL family. In terms of assembly, homopentamer.

It is found in the cell membrane. Channel that opens in response to stretch forces in the membrane lipid bilayer. May participate in the regulation of osmotic pressure changes within the cell. This chain is Large-conductance mechanosensitive channel, found in Lactobacillus acidophilus (strain ATCC 700396 / NCK56 / N2 / NCFM).